The sequence spans 420 residues: Tyrosine--tRNA ligase 1 (420 aa).

Tyr-35 contacts L-tyrosine. Residues 40–49 carry the 'HIGH' region motif; sequence PTAGSLHIGH. Positions 172 and 176 each coordinate L-tyrosine. Residues 232-236 carry the 'KMSKS' region motif; it reads KFGKT. Residue Lys-235 participates in ATP binding. The 65-residue stretch at 355–419 folds into the S4 RNA-binding domain; the sequence is INIAELLVKS…GKKQFRLIKL (65 aa).

Belongs to the class-I aminoacyl-tRNA synthetase family. TyrS type 1 subfamily. Homodimer.

It is found in the cytoplasm. It catalyses the reaction tRNA(Tyr) + L-tyrosine + ATP = L-tyrosyl-tRNA(Tyr) + AMP + diphosphate + H(+). In terms of biological role, catalyzes the attachment of tyrosine to tRNA(Tyr) in a two-step reaction: tyrosine is first activated by ATP to form Tyr-AMP and then transferred to the acceptor end of tRNA(Tyr). The protein is Tyrosine--tRNA ligase 1 of Pseudoalteromonas translucida (strain TAC 125).